We begin with the raw amino-acid sequence, 177 residues long: Large ribosomal subunit protein uL6 (177 aa).

This sequence belongs to the universal ribosomal protein uL6 family. As to quaternary structure, part of the 50S ribosomal subunit.

Functionally, this protein binds to the 23S rRNA, and is important in its secondary structure. It is located near the subunit interface in the base of the L7/L12 stalk, and near the tRNA binding site of the peptidyltransferase center. The chain is Large ribosomal subunit protein uL6 from Bordetella avium (strain 197N).